We begin with the raw amino-acid sequence, 593 residues long: NADH-quinone oxidoreductase subunit C/D (593 aa).

Residues 1–184 form an NADH dehydrogenase I subunit C region; it reads MTTGSALYIP…DPFSLNLAKQ (184 aa). Residues 208–593 form an NADH dehydrogenase I subunit D region; the sequence is DYMFLNLGPN…IDFVMADVDR (386 aa).

In the N-terminal section; belongs to the complex I 30 kDa subunit family. This sequence in the C-terminal section; belongs to the complex I 49 kDa subunit family. In terms of assembly, NDH-1 is composed of 13 different subunits. Subunits NuoB, CD, E, F, and G constitute the peripheral sector of the complex.

It localises to the cell inner membrane. It carries out the reaction a quinone + NADH + 5 H(+)(in) = a quinol + NAD(+) + 4 H(+)(out). NDH-1 shuttles electrons from NADH, via FMN and iron-sulfur (Fe-S) centers, to quinones in the respiratory chain. The immediate electron acceptor for the enzyme in this species is believed to be ubiquinone. Couples the redox reaction to proton translocation (for every two electrons transferred, four hydrogen ions are translocated across the cytoplasmic membrane), and thus conserves the redox energy in a proton gradient. The polypeptide is NADH-quinone oxidoreductase subunit C/D (Pseudomonas fluorescens (strain ATCC BAA-477 / NRRL B-23932 / Pf-5)).